Reading from the N-terminus, the 89-residue chain is MALDSAKKQEIISKFAEHEGDTGSPAVQIALLSERISYLTEHLKEHKKDHSSRLGLLKLVGQRKRLLNYLKRKDYEKYTQVIKELGIRG.

This sequence belongs to the universal ribosomal protein uS15 family. As to quaternary structure, part of the 30S ribosomal subunit. Forms a bridge to the 50S subunit in the 70S ribosome, contacting the 23S rRNA.

In terms of biological role, one of the primary rRNA binding proteins, it binds directly to 16S rRNA where it helps nucleate assembly of the platform of the 30S subunit by binding and bridging several RNA helices of the 16S rRNA. Forms an intersubunit bridge (bridge B4) with the 23S rRNA of the 50S subunit in the ribosome. In Nitratiruptor sp. (strain SB155-2), this protein is Small ribosomal subunit protein uS15.